Here is a 516-residue protein sequence, read N- to C-terminus: Glutamyl-tRNA(Gln) amidotransferase subunit B, mitochondrial (516 aa).

It belongs to the GatB/GatE family. GatB subfamily. As to quaternary structure, subunit of the heterotrimeric GatCAB amidotransferase (AdT) complex, composed of A, B and C subunits.

It localises to the mitochondrion. It catalyses the reaction L-glutamyl-tRNA(Gln) + L-glutamine + ATP + H2O = L-glutaminyl-tRNA(Gln) + L-glutamate + ADP + phosphate + H(+). Functionally, allows the formation of correctly charged Gln-tRNA(Gln) through the transamidation of misacylated Glu-tRNA(Gln) in the mitochondria. The reaction takes place in the presence of glutamine and ATP through an activated gamma-phospho-Glu-tRNA(Gln). The sequence is that of Glutamyl-tRNA(Gln) amidotransferase subunit B, mitochondrial from Drosophila melanogaster (Fruit fly).